The chain runs to 266 residues: GTP cyclohydrolase III (266 aa).

The protein belongs to the archaeal-type GTP cyclohydrolase family.

The enzyme catalyses GTP + 3 H2O = 2-amino-5-formylamino-6-(5-phospho-D-ribosylamino)pyrimidin-4(3H)-one + 2 phosphate + 2 H(+). Catalyzes the formation of 2-amino-5-formylamino-6-ribofuranosylamino-4(3H)-pyrimidinone ribonucleotide monophosphate and inorganic phosphate from GTP. Also has an independent pyrophosphate phosphohydrolase activity. This Methanococcus maripaludis (strain C7 / ATCC BAA-1331) protein is GTP cyclohydrolase III.